The primary structure comprises 207 residues: MQITLLFHTPLSVCSHATRTCWQSFEKGDCGGEKDKELIDRVGNKFKHASTLEHLNYTFYIQGISRACLQEVARHRHTSPSVKSTRYTLKELRNEAEFKIGDFENASRYLVLCGNEEVDNASIKALENLRTILQKSISLDIAKYCLPESYKTELTLTINARSLQNFISLRSSKSALWEIRNLANALFEALPQEHKFIFEHCLHKDIE.

In terms of domain architecture, ThyX spans 1-204; it reads MQITLLFHTP…KFIFEHCLHK (204 aa). Residues Ser50 and 74–76 contribute to the FAD site; that span reads RHR. Residues 71–74, 84–86, and Lys143 contribute to the dUMP site; these read EVAR and STR. Positions 74–84 match the ThyX motif motif; it reads RHRHTSPSVKS. Residues 159-161 and Asn165 each bind FAD; that span reads NAR. Position 170 (Arg170) interacts with dUMP. The active-site Involved in ionization of N3 of dUMP, leading to its activation is the Arg170.

This sequence belongs to the thymidylate synthase ThyX family. In terms of assembly, homotetramer. FAD serves as cofactor.

The catalysed reaction is dUMP + (6R)-5,10-methylene-5,6,7,8-tetrahydrofolate + NADPH + H(+) = dTMP + (6S)-5,6,7,8-tetrahydrofolate + NADP(+). It participates in pyrimidine metabolism; dTTP biosynthesis. Functionally, catalyzes the reductive methylation of 2'-deoxyuridine-5'-monophosphate (dUMP) to 2'-deoxythymidine-5'-monophosphate (dTMP) while utilizing 5,10-methylenetetrahydrofolate (mTHF) as the methyl donor, and NADPH and FADH(2) as the reductant. The chain is Flavin-dependent thymidylate synthase from Campylobacter jejuni subsp. jejuni serotype O:2 (strain ATCC 700819 / NCTC 11168).